The primary structure comprises 868 residues: mRNA-capping enzyme (868 aa).

K282 acts as the N6-GMP-lysine intermediate in catalysis. The mRNA cap 0 methyltransferase domain maps to 594–868 (GIYRAQTALI…LFGFICLRKN (275 aa)). Residues K607, G624, D646, and 710–712 (LFI) each bind S-adenosyl-L-methionine.

This sequence in the N-terminal section; belongs to the dsDNA virus mRNA guanylyltransferase family. In the C-terminal section; belongs to the class I-like SAM-binding methyltransferase superfamily. mRNA cap 0 methyltransferase family. Part of the viral DNA-directed RNA polymerase that consists of 8 polII-like subunits (RPB1, RPB2, RPB3, RPB5, RPB6, RPB7, RPB9, RPB10), a capping enzyme and a termination factor.

It is found in the virion. The enzyme catalyses a 5'-end triphospho-ribonucleoside in mRNA + H2O = a 5'-end diphospho-ribonucleoside in mRNA + phosphate + H(+). It carries out the reaction a 5'-end diphospho-ribonucleoside in mRNA + GTP + H(+) = a 5'-end (5'-triphosphoguanosine)-ribonucleoside in mRNA + diphosphate. The catalysed reaction is a 5'-end (5'-triphosphoguanosine)-ribonucleoside in mRNA + S-adenosyl-L-methionine = a 5'-end (N(7)-methyl 5'-triphosphoguanosine)-ribonucleoside in mRNA + S-adenosyl-L-homocysteine. It functions in the pathway mRNA processing; mRNA capping. Its function is as follows. Probably catalyzes the second reaction in the mRNA cap formation pathway. Forms a covalent complex with GTP. This is mRNA-capping enzyme from Ornithodoros (relapsing fever ticks).